Consider the following 261-residue polypeptide: Probable pectin methylesterase CGR2 (261 aa).

The Cytoplasmic segment spans residues methionine 1–serine 35. The helical transmembrane segment at isoleucine 36–isoleucine 56 threads the bilayer. Residues phenylalanine 57 to histidine 261 are Lumenal-facing. Asparagine 174 is a glycosylation site (N-linked (GlcNAc...) asparagine).

The protein belongs to the class I-like SAM-binding methyltransferase superfamily.

The protein localises to the golgi apparatus membrane. Its function is as follows. Together with CGR3, required for homogalacturonan pectins (HG) methylesterification in the Golgi apparatus prior to integration into cell walls, essential for general growth and development. Promotes rosette growth. Impacts carbon (C) partitioning, photosynthesis and respiration efficiency by influencing leaf mesophyll cell walls morphology and physiology; pectin methylesterification modulates both expansion and positioning of cells in leaves, probably by changing cell walls plasticity. In Arabidopsis thaliana (Mouse-ear cress), this protein is Probable pectin methylesterase CGR2.